Here is a 420-residue protein sequence, read N- to C-terminus: UDP-N-acetylglucosamine 1-carboxyvinyltransferase (420 aa).

22–23 (KN) is a phosphoenolpyruvate binding site. Residue R92 participates in UDP-N-acetyl-alpha-D-glucosamine binding. C116 serves as the catalytic Proton donor. At C116 the chain carries 2-(S-cysteinyl)pyruvic acid O-phosphothioketal. UDP-N-acetyl-alpha-D-glucosamine is bound by residues 121–125 (RPVDL), 161–164 (KVSV), D306, and I328.

Belongs to the EPSP synthase family. MurA subfamily.

It localises to the cytoplasm. It catalyses the reaction phosphoenolpyruvate + UDP-N-acetyl-alpha-D-glucosamine = UDP-N-acetyl-3-O-(1-carboxyvinyl)-alpha-D-glucosamine + phosphate. It functions in the pathway cell wall biogenesis; peptidoglycan biosynthesis. Its function is as follows. Cell wall formation. Adds enolpyruvyl to UDP-N-acetylglucosamine. The protein is UDP-N-acetylglucosamine 1-carboxyvinyltransferase of Yersinia pseudotuberculosis serotype O:1b (strain IP 31758).